We begin with the raw amino-acid sequence, 66 residues long: DNA-directed RNA polymerase subunit omega (66 aa).

It belongs to the RNA polymerase subunit omega family. The RNAP catalytic core consists of 2 alpha, 1 beta, 1 beta' and 1 omega subunit. When a sigma factor is associated with the core the holoenzyme is formed, which can initiate transcription.

The enzyme catalyses RNA(n) + a ribonucleoside 5'-triphosphate = RNA(n+1) + diphosphate. Functionally, promotes RNA polymerase assembly. Latches the N- and C-terminal regions of the beta' subunit thereby facilitating its interaction with the beta and alpha subunits. This chain is DNA-directed RNA polymerase subunit omega, found in Bacillus licheniformis (strain ATCC 14580 / DSM 13 / JCM 2505 / CCUG 7422 / NBRC 12200 / NCIMB 9375 / NCTC 10341 / NRRL NRS-1264 / Gibson 46).